Reading from the N-terminus, the 240-residue chain is Hairy and enhancer of split-related protein HELT (240 aa).

One can recognise a bHLH domain in the interval Arg-10–Leu-65. At Lys-48 the chain carries N6-acetyllysine. The region spanning Phe-86 to Leu-121 is the Orange domain.

This sequence belongs to the HEY family. In terms of assembly, self-associates. Interacts with HES5 and HEY2. In terms of tissue distribution, expressed in heart and testis.

It localises to the nucleus. Functionally, transcriptional repressor which binds preferentially to the canonical E box sequence 5'-CACGCG-3'. Required for the development of GABAergic neurons. This Mus musculus (Mouse) protein is Hairy and enhancer of split-related protein HELT (Helt).